Here is a 388-residue protein sequence, read N- to C-terminus: Protein-glutamate methylesterase/protein-glutamine glutaminase 4 (388 aa).

One can recognise a Response regulatory domain in the interval 4–121; that stretch reads KVLVVDDSGF…SGDASKIKRL (118 aa). At Asp55 the chain carries 4-aspartylphosphate. The disordered stretch occupies residues 137–196; sequence SGASAPASVPQPAKPAAPIPVREPPKPAAPVTRPAEPRAKAPPAKPEPKPEVKAAKSRRT. Over residues 148 to 164 the composition is skewed to pro residues; it reads PAKPAAPIPVREPPKPA. In terms of domain architecture, CheB-type methylesterase spans 197–388; it reads PRQDYKVVLI…FAPRLIDGVG (192 aa). Residues Ser209, His236, and Asp332 contribute to the active site.

The protein belongs to the CheB family. In terms of processing, phosphorylated by CheA. Phosphorylation of the N-terminal regulatory domain activates the methylesterase activity.

It localises to the cytoplasm. It catalyses the reaction [protein]-L-glutamate 5-O-methyl ester + H2O = L-glutamyl-[protein] + methanol + H(+). It carries out the reaction L-glutaminyl-[protein] + H2O = L-glutamyl-[protein] + NH4(+). In terms of biological role, involved in chemotaxis. Part of a chemotaxis signal transduction system that modulates chemotaxis in response to various stimuli. Catalyzes the demethylation of specific methylglutamate residues introduced into the chemoreceptors (methyl-accepting chemotaxis proteins or MCP) by CheR. Also mediates the irreversible deamidation of specific glutamine residues to glutamic acid. This is Protein-glutamate methylesterase/protein-glutamine glutaminase 4 from Hahella chejuensis (strain KCTC 2396).